Here is a 100-residue protein sequence, read N- to C-terminus: Small ribosomal subunit protein uS14c (100 aa).

The protein belongs to the universal ribosomal protein uS14 family. As to quaternary structure, part of the 30S ribosomal subunit.

The protein localises to the plastid. It is found in the chloroplast. In terms of biological role, binds 16S rRNA, required for the assembly of 30S particles. This chain is Small ribosomal subunit protein uS14c, found in Physcomitrium patens (Spreading-leaved earth moss).